The following is a 403-amino-acid chain: Chalcone synthase 2 (403 aa).

Residue 59 to 66 (RFQRMCES) participates in CoA binding. The Acyl-thioester intermediate role is filled by Cys168. 220–221 (GD) is a substrate binding site. Ala313 provides a ligand contact to CoA.

The protein belongs to the thiolase-like superfamily. Chalcone/stilbene synthases family. Homodimer.

It carries out the reaction (E)-4-coumaroyl-CoA + 3 malonyl-CoA + 3 H(+) = 2',4,4',6'-tetrahydroxychalcone + 3 CO2 + 4 CoA. It participates in secondary metabolite biosynthesis; flavonoid biosynthesis. Functionally, the primary product of this enzyme is 4,2',4',6'-tetrahydroxychalcone (also termed naringenin-chalcone or chalcone) which can under specific conditions spontaneously isomerize into naringenin. This chain is Chalcone synthase 2 (CHS2), found in Oryza sativa subsp. japonica (Rice).